A 386-amino-acid chain; its full sequence is Galactokinase (386 aa).

35–38 (EHTD) lines the substrate pocket. Residue 125–131 (GAGLSSS) coordinates ATP. Mg(2+) is bound by residues serine 131 and glutamate 163. Aspartate 175 acts as the Proton acceptor in catalysis. Tyrosine 224 lines the substrate pocket.

The protein belongs to the GHMP kinase family. GalK subfamily.

It is found in the cytoplasm. The catalysed reaction is alpha-D-galactose + ATP = alpha-D-galactose 1-phosphate + ADP + H(+). Its pathway is carbohydrate metabolism; galactose metabolism. Its function is as follows. Catalyzes the transfer of the gamma-phosphate of ATP to D-galactose to form alpha-D-galactose-1-phosphate (Gal-1-P). This chain is Galactokinase, found in Vibrio cholerae serotype O1 (strain ATCC 39315 / El Tor Inaba N16961).